The primary structure comprises 328 residues: Pancreas transcription factor 1 subunit alpha (328 aa).

Residues 163-215 (QLRQAANVRERRRMQSINDAFEGLRSHIPTLPYEKRLSKVDTLRLAIGYINFL) enclose the bHLH domain. Disordered regions lie at residues 259-278 (RGTR…PLAG) and 305-328 (DPRK…EFVS).

As to quaternary structure, component of the pancreas transcription factor 1 complex (PTF1) which is composed of TCF3/p75, TCF12/p64 and PTF1A/p48. TCF3 is responsible for the nuclear import of the p48/p64 complex. Interacts with TCF3 and RBPSUH/RBP-Jkappa. As to expression, pancreas-specific (at protein level). Loss of expression is seen in ductal type pancreas cancers.

The protein localises to the nucleus. Its subcellular location is the cytoplasm. Transcription factor implicated in the cell fate determination in various organs. Binds to the E-box consensus sequence 5'-CANNTG-3'. Plays a role in early and late pancreas development and differentiation. Important for determining whether cells allocated to the pancreatic buds continue towards pancreatic organogenesis or revert back to duodenal fates. May be involved in the maintenance of exocrine pancreas-specific gene expression including ELA1 and amylase. Required for the formation of pancreatic acinar and ductal cells. Plays an important role in cerebellar development. Directly regulated by FOXN4 and RORC during retinal development, FOXN4-PTF1A pathway plays a central role in directing the differentiation of retinal progenitors towards horizontal and amacrine fates. This is Pancreas transcription factor 1 subunit alpha (PTF1A) from Homo sapiens (Human).